Here is a 642-residue protein sequence, read N- to C-terminus: Zinc finger protein 14 (642 aa).

The KRAB domain occupies 4–76 (VSFEDVAVNF…MVERLCESRR (73 aa)). Residues 103–125 (HECSFCGRDFIHHSSLNRHMRSH) form a C2H2-type 1 zinc finger. The C2H2-type 2; degenerate zinc-finger motif lies at 141–163 (CKCKAVGKTFSYHHCFRKHERTH). The segment at 169-191 (YECKQCGKAFIYYQPFQRHERTH) adopts a C2H2-type 3 zinc-finger fold. Residues 197–217 (YECKQCGKTFIYYQSFQKHAH) form a C2H2-type 4; atypical zinc finger. C2H2-type zinc fingers lie at residues 223–245 (YECK…KRTH), 251–273 (YECK…ERTH), 279–301 (YKCK…KRTH), 307–329 (YECK…VIIH), 335–357 (YKCK…ERTH), 363–385 (YECK…ERTH), 391–413 (YECK…ETTH), 419–441 (YECK…ERTH), 447–469 (YECK…ERSH), 475–497 (YECK…ERTH), 503–525 (YECK…EKIH), 531–553 (FECK…ERTH), 559–581 (YQCK…ERTH), 587–609 (YRCK…ERSH), and 615–637 (YECK…ERTH).

Belongs to the krueppel C2H2-type zinc-finger protein family.

It is found in the nucleus. Functionally, may be involved in transcriptional regulation. This chain is Zinc finger protein 14 (ZNF14), found in Homo sapiens (Human).